Consider the following 109-residue polypeptide: Nucleoid-associated protein YbaB (109 aa).

The protein belongs to the YbaB/EbfC family. Homodimer.

It localises to the cytoplasm. The protein localises to the nucleoid. Functionally, binds to DNA and alters its conformation. May be involved in regulation of gene expression, nucleoid organization and DNA protection. This chain is Nucleoid-associated protein YbaB, found in Escherichia coli O8 (strain IAI1).